The sequence spans 359 residues: S-adenosylmethionine:tRNA ribosyltransferase-isomerase (359 aa).

This sequence belongs to the QueA family. Monomer.

The protein localises to the cytoplasm. The catalysed reaction is 7-aminomethyl-7-carbaguanosine(34) in tRNA + S-adenosyl-L-methionine = epoxyqueuosine(34) in tRNA + adenine + L-methionine + 2 H(+). It functions in the pathway tRNA modification; tRNA-queuosine biosynthesis. Its function is as follows. Transfers and isomerizes the ribose moiety from AdoMet to the 7-aminomethyl group of 7-deazaguanine (preQ1-tRNA) to give epoxyqueuosine (oQ-tRNA). The chain is S-adenosylmethionine:tRNA ribosyltransferase-isomerase from Ralstonia pickettii (strain 12J).